A 1083-amino-acid chain; its full sequence is uncharacterized protein (1083 aa).

The segment at 93–145 (SKGNLRYVPTTSRNPSNTDTYSSSIDISSSSSSINTSDDSSGKTSSNDLSDMS) is disordered. The span at 108-145 (SNTDTYSSSIDISSSSSSINTSDDSSGKTSSNDLSDMS) shows a compositional bias: low complexity.

The protein resides in the virion. This is an uncharacterized protein from Acanthamoeba polyphaga (Amoeba).